Here is a 353-residue protein sequence, read N- to C-terminus: Farnesyl pyrophosphate synthase (353 aa).

Isopentenyl diphosphate-binding residues include Lys-57, Arg-60, and Gln-96. Lys-57 bears the N6-(2-hydroxyisobutyryl)lysine; alternate mark. The residue at position 57 (Lys-57) is an N6-acetyllysine; alternate. Mg(2+)-binding residues include Asp-103 and Asp-107. Arg-112 contacts dimethylallyl diphosphate. Arg-113 is an isopentenyl diphosphate binding site. Dimethylallyl diphosphate contacts are provided by Lys-200, Thr-201, Gln-240, Lys-257, and Lys-266.

It belongs to the FPP/GGPP synthase family. Homodimer. Interacts with RSAD2. Mg(2+) serves as cofactor.

The protein resides in the cytoplasm. It carries out the reaction isopentenyl diphosphate + dimethylallyl diphosphate = (2E)-geranyl diphosphate + diphosphate. It catalyses the reaction isopentenyl diphosphate + (2E)-geranyl diphosphate = (2E,6E)-farnesyl diphosphate + diphosphate. It functions in the pathway isoprenoid biosynthesis; farnesyl diphosphate biosynthesis; farnesyl diphosphate from geranyl diphosphate and isopentenyl diphosphate: step 1/1. Its pathway is isoprenoid biosynthesis; geranyl diphosphate biosynthesis; geranyl diphosphate from dimethylallyl diphosphate and isopentenyl diphosphate: step 1/1. Its activity is regulated as follows. Inactivated by interferon-induced RSAD2. This inactivation may result of disruption of lipid rafts at the plasma membrane, and thus have an antiviral effect since many enveloped viruses need lipid rafts to bud efficiently out of the cell. In terms of biological role, key enzyme in isoprenoid biosynthesis which catalyzes the formation of farnesyl diphosphate (FPP), a precursor for several classes of essential metabolites including sterols, dolichols, carotenoids, and ubiquinones. FPP also serves as substrate for protein farnesylation and geranylgeranylation. Catalyzes the sequential condensation of isopentenyl pyrophosphate with the allylic pyrophosphates, dimethylallyl pyrophosphate, and then with the resultant geranylpyrophosphate to the ultimate product farnesyl pyrophosphate. The protein is Farnesyl pyrophosphate synthase (Fdps) of Mus musculus (Mouse).